We begin with the raw amino-acid sequence, 128 residues long: Organic solute transporter subunit beta (128 aa).

Topologically, residues 1–30 (MDHSAEKAAANAEVPQELLEEMLWYFRAED) are extracellular. The helical transmembrane segment at 31 to 53 (AAPWNYSILVLAVLVVMTSMFLL) threads the bilayer. Topologically, residues 54 to 128 (RRSILANRNR…FLPDPQETES (75 aa)) are cytoplasmic. Disordered stretches follow at residues 61-80 (RNRK…HLDD) and 101-128 (PDLA…ETES). 2 stretches are compositionally biased toward basic and acidic residues: residues 66-80 (QPQD…HLDD) and 101-115 (PDLA…EKDS). The residue at position 116 (Ser-116) is a Phosphoserine.

Belongs to the OST-beta family. In terms of assembly, interacts with SLC51A. The Ost-alpha/Ost-beta complex is a heterodimer composed of alpha (SLC51A) and beta (SLC51B) subunit; induces the transport of SLC51A from the endoplasmic reticulum to the plasma membrane. As to expression, present at high level in ileum. In ileum, it is restricted to the apical domain on the mature villus enterocytes with little detectable expression in the goblet cells or crypt enterocytes (at protein level). Expressed in kidney but not in heart, brain, liver, spleen, embryo, lung, thymus, ovary nor testis.

It localises to the cell membrane. The catalysed reaction is taurocholate(out) = taurocholate(in). It catalyses the reaction tauroursodeoxycholate(out) = tauroursodeoxycholate(in). It carries out the reaction glycoursodeoxycholate(out) = glycoursodeoxycholate(in). The enzyme catalyses glycocholate(out) = glycocholate(in). The catalysed reaction is taurochenodeoxycholate(out) = taurochenodeoxycholate(in). It catalyses the reaction glycochenodeoxycholate(out) = glycochenodeoxycholate(in). It carries out the reaction taurodeoxycholate(out) = taurodeoxycholate(in). The enzyme catalyses glycodeoxycholate(out) = glycodeoxycholate(in). The catalysed reaction is prostaglandin E2(out) = prostaglandin E2(in). It catalyses the reaction estrone 3-sulfate(out) = estrone 3-sulfate(in). It carries out the reaction dehydroepiandrosterone 3-sulfate(out) = dehydroepiandrosterone 3-sulfate(in). Essential component of the Ost-alpha/Ost-beta complex, a heterodimer that acts as the intestinal basolateral transporter responsible for bile acid export from enterocytes into portal blood. The Ost-alpha/Ost-beta complex efficiently transports the major species of bile acids (taurocholate). Taurine conjugates are transported more efficiently across the basolateral membrane than glycine-conjugated bile acids. Can also transport steroids such as estrone 3-sulfate and dehydroepiandrosterone 3-sulfate, therefore playing a role in the enterohepatic circulation of sterols. Able to transport eicosanoids such as prostaglandin E2. Modulates SLC51A glycosylation, membrane trafficking and stability activities. In Mus musculus (Mouse), this protein is Organic solute transporter subunit beta (Slc51b).